We begin with the raw amino-acid sequence, 436 residues long: Methylenetetrahydrofolate--tRNA-(uracil-5-)-methyltransferase TrmFO (436 aa).

10 to 15 (GAGLAG) contributes to the FAD binding site.

This sequence belongs to the MnmG family. TrmFO subfamily. FAD is required as a cofactor.

The protein resides in the cytoplasm. It carries out the reaction uridine(54) in tRNA + (6R)-5,10-methylene-5,6,7,8-tetrahydrofolate + NADH + H(+) = 5-methyluridine(54) in tRNA + (6S)-5,6,7,8-tetrahydrofolate + NAD(+). It catalyses the reaction uridine(54) in tRNA + (6R)-5,10-methylene-5,6,7,8-tetrahydrofolate + NADPH + H(+) = 5-methyluridine(54) in tRNA + (6S)-5,6,7,8-tetrahydrofolate + NADP(+). Functionally, catalyzes the folate-dependent formation of 5-methyl-uridine at position 54 (M-5-U54) in all tRNAs. The chain is Methylenetetrahydrofolate--tRNA-(uracil-5-)-methyltransferase TrmFO from Exiguobacterium sp. (strain ATCC BAA-1283 / AT1b).